The primary structure comprises 304 residues: tRNA pseudouridine synthase B (304 aa).

Asp-48 (nucleophile) is an active-site residue.

This sequence belongs to the pseudouridine synthase TruB family. Type 1 subfamily.

The catalysed reaction is uridine(55) in tRNA = pseudouridine(55) in tRNA. In terms of biological role, responsible for synthesis of pseudouridine from uracil-55 in the psi GC loop of transfer RNAs. This chain is tRNA pseudouridine synthase B, found in Pseudomonas paraeruginosa (strain DSM 24068 / PA7) (Pseudomonas aeruginosa (strain PA7)).